The chain runs to 748 residues: Signal transducer and activator of transcription 4 (748 aa).

The SH2 domain occupies 569–664 (WIDGYVMGFV…ENPLKYLYPD (96 aa)). Lysine 667 carries the post-translational modification N6-acetyllysine. Tyrosine 693 is subject to Phosphotyrosine; by JAK. Serine 721 bears the Phosphoserine; by MAP2K6 mark.

It belongs to the transcription factor STAT family. Forms a homodimer or a heterodimer with a related family member. Interacts with ARL2BP. The SH2 domain interacts, in vitro, with IL12RB2 via a short cytoplasmic domain. Interacts with STAT1. Interacts with JUN; this complex efficiently interacts with the AP-1-related sequence of the IFN-gamma. In terms of processing, acetylation at Lys-667 is required for JAK2-mediated phosphorylation and activation of STAT4. Tyrosine phosphorylated upon IL12 and IFN-alpha activation, but not by IFN-gamma in T-lymphocytes and NK cells. Serine phosphorylation is required for maximal transcriptional activity but not for DNA binding. Phosphorylation by MAP2K6 at Ser-721 is required for full transcriptional activity induced by IL12. However this serine phosphorylation is not required for cell proliferation although critical for IFN-gamma production.

The protein localises to the cytoplasm. The protein resides in the nucleus. Transcriptional regulator mainly expressed in hematopoietic cells that plays a critical role in cellular growth, differentiation and immune response. Plays a key role in the differentiation of T-helper 1 cells and the production of interferon-gamma. Also participates in multiple neutrophil functions including chemotaxis and production of the neutrophil extracellular traps. After IL12 binding to its receptor IL12RB2, STAT4 interacts with the intracellular domain of IL12RB2 and becomes tyrosine phosphorylated. Phosphorylated STAT4 then homodimerizes and migrates to the nucleus where it can recognize STAT target sequences present in IL12 responsive genes. Although IL12 appears to be the predominant activating signal, STAT4 can also be phosphorylated and activated in response to IFN-gamma stimulation via JAK1 and TYK2 and in response to different interleukins including IL23, IL2 and IL35. Transcription activation of IFN-gamma gene is mediated by interaction with JUN that forms a complex that efficiently interacts with the AP-1-related sequence of the IFN-gamma promoter. In response to IFN-alpha/beta signaling, acts as a transcriptional repressor and suppresses IL5 and IL13 mRNA expression during response to T-cell receptor (TCR) activation. This chain is Signal transducer and activator of transcription 4 (STAT4), found in Homo sapiens (Human).